The primary structure comprises 358 residues: Probable D-xylulose reductase A (358 aa).

Zn(2+) contacts are provided by C47, H72, and E73. Position 182 to 187 (182 to 187) interacts with NAD(+); sequence GAGPVG.

The protein belongs to the zinc-containing alcohol dehydrogenase family. Zn(2+) serves as cofactor.

The catalysed reaction is xylitol + NAD(+) = D-xylulose + NADH + H(+). It functions in the pathway carbohydrate degradation; L-arabinose degradation via L-arabinitol; D-xylulose 5-phosphate from L-arabinose (fungal route): step 4/5. In terms of biological role, xylitol dehydrogenase which catalyzes the conversion of xylitol to D-xylulose. Xylose is a major component of hemicelluloses such as xylan. Most fungi utilize D-xylose via three enzymatic reactions, xylose reductase (XR), xylitol dehydrogenase (XDH), and xylulokinase, to form xylulose 5-phosphate, which enters pentose phosphate pathway. The chain is Probable D-xylulose reductase A (xdhA) from Neosartorya fischeri (strain ATCC 1020 / DSM 3700 / CBS 544.65 / FGSC A1164 / JCM 1740 / NRRL 181 / WB 181) (Aspergillus fischerianus).